Consider the following 421-residue polypeptide: MESLKRWNEERGLWCEKGVQVLLTTIGAFAAFGLMTIAISTDYWLYTRALICNTTNLTAGDDGPPHRGGSGSSEKKDPGGLTHSGLWRICCLEGLKRGVCVKINHFPEDTDYDHDSAEYLLRVVRASSIFPILSAILLLLGGVCVAASRVYKSKRNIILGAGILFVAAGLSNIIGVIVYISANAGEPGPKRDEEKKNHYSYGWSFYFGGLSFILAEVIGVLAVNIYIERSREAHCQSRSDLLKAGGGAGGSGGSGPSAILRLPSYRFRYRRRSRSSSRGSSEASPSRDASPGGPGGPGFASTDISMYTLSRDPSKGSVAAGLASAGGGGGGAGVGAYGGAAGAAGGGGTGSERDRGSSAGFLTLHNAFPKEAASGVTVTVTGPPAAPAPAPPAPAAPAPGTLSKEAAASNTNTLNRKTTPV.

Helical transmembrane passes span 19–39, 127–147, 157–177, and 207–227; these read VQVL…TIAI, SSIF…CVAA, IILG…IGVI, and FGGL…NIYI. 2 positions are modified to phosphoserine: S251 and S254. Residues 271–304 are disordered; the sequence is RRSRSSSRGSSEASPSRDASPGGPGGPGFASTDI. A compositionally biased stretch (low complexity) spans 276-287; the sequence is SSRGSSEASPSR. A helical membrane pass occupies residues 318–338; the sequence is VAAGLASAGGGGGGAGVGAYG. 2 disordered regions span residues 342–363 and 378–421; these read GAAG…GFLT and VTVT…TTPV. A compositionally biased stretch (pro residues) spans 384–397; it reads PAAPAPAPPAPAAP. The segment covering 408-421 has biased composition (polar residues); it reads ASNTNTLNRKTTPV.

Belongs to the PMP-22/EMP/MP20 family. CACNG subfamily. As to quaternary structure, interacts with CACNA1C. Identified in a complex with the L-type calcium channel subunits CACNA1C, CACNA2D1 and either CACNB1 or CACNB2. Acts as an auxiliary subunit for AMPA-selective glutamate receptors (AMPARs). Found in a complex with GRIA1, GRIA2, GRIA3, GRIA4, CNIH2, CNIH3, CACNG2, CACNG3, CACNG4, CACNG5 and CACNG7. Interacts with CNIH2. Found in a complex with GRIA1, GRIA2, GRIA3, GRIA4, DLG4 and CNIH2. In terms of processing, palmitoylated. Probably palmitoylated by ZDHHC3 and ZDHHC7.

It is found in the cell membrane. The protein resides in the postsynaptic density membrane. Its function is as follows. Regulates the activity of L-type calcium channels that contain CACNA1C as pore-forming subunit. Regulates the trafficking and gating properties of AMPA-selective glutamate receptors (AMPARs). Promotes their targeting to the cell membrane and synapses and modulates their gating properties by slowing their rates of activation, deactivation and desensitization and by mediating their resensitization. Does not show subunit-specific AMPA receptor regulation and regulates all AMPAR subunits. Thought to stabilize the calcium channel in an inactivated (closed) state. The protein is Voltage-dependent calcium channel gamma-8 subunit of Rattus norvegicus (Rat).